Reading from the N-terminus, the 303-residue chain is Mesenteric estrogen-dependent adipogenesis protein (303 aa).

As to expression, highly expressed in the visceral fat depot.

It is found in the cytoplasm. Its function is as follows. Involved in processes that promote adipocyte differentiation, lipid accumulation, and glucose uptake in mature adipocytes. The polypeptide is Mesenteric estrogen-dependent adipogenesis protein (MEDAG) (Homo sapiens (Human)).